Reading from the N-terminus, the 151-residue chain is HTH-type transcriptional regulator FL11 (151 aa).

Residues 5-66 enclose the HTH asnC-type domain; it reads LDEIDKKIIK…IIDPEALGYS (62 aa). The segment at residues 24–43 is a DNA-binding region (H-T-H motif); sequence LREISKITGLAESTIHERIR. 98 to 104 lines the L-arginine pocket; sequence ETTGDYD. Residues Asn118, Asp122, and 133–135 each bind L-lysine; that span reads THT. L-arginine contacts are provided by residues Asp122 and 133 to 135; that span reads THT.

In terms of assembly, homodimer. Binds DNA as a dimer and an octamer. The octamer formed with lysine is stable in solution, but the octamer formed with arginine is unstable without DNA. When crystallized in the absence of DNA, dimers are assembled into helical cylinders with six dimers per turn. In solution, predominantly behaves as a dimer.

With respect to regulation, in the famine mode, FL11 forms dimers and acts as a repressor, leading to growth arrest. In the feast mode, in the presence of high concentrations of lysine or arginine, four dimers assemble into an octamer and cover the fl11 and lysine biosynthesis promoters. This leads to the inhibition of fl11 expression and lysine biosynthesis, decrease of the FL11 concentration in the cell, derepression of the target genes and activation of the metabolism. In terms of biological role, DNA-binding protein involved in the repression of transcription of a large number of genes, thereby arresting growth, in response to environmental changes. Binding sites are identified in promoters of approximately 200 transcription units, including genes involved in ATP synthesis, transmembrane transport, translation and DNA synthesis. The polypeptide is HTH-type transcriptional regulator FL11 (Pyrococcus horikoshii (strain ATCC 700860 / DSM 12428 / JCM 9974 / NBRC 100139 / OT-3)).